Reading from the N-terminus, the 254-residue chain is 3-deoxy-manno-octulosonate cytidylyltransferase (254 aa).

It belongs to the KdsB family.

Its subcellular location is the cytoplasm. The catalysed reaction is 3-deoxy-alpha-D-manno-oct-2-ulosonate + CTP = CMP-3-deoxy-beta-D-manno-octulosonate + diphosphate. It participates in nucleotide-sugar biosynthesis; CMP-3-deoxy-D-manno-octulosonate biosynthesis; CMP-3-deoxy-D-manno-octulosonate from 3-deoxy-D-manno-octulosonate and CTP: step 1/1. Its pathway is bacterial outer membrane biogenesis; lipopolysaccharide biosynthesis. Activates KDO (a required 8-carbon sugar) for incorporation into bacterial lipopolysaccharide in Gram-negative bacteria. The chain is 3-deoxy-manno-octulosonate cytidylyltransferase from Pseudomonas aeruginosa (strain UCBPP-PA14).